Here is a 234-residue protein sequence, read N- to C-terminus: Phosphoribosylaminoimidazole-succinocarboxamide synthase (234 aa).

This sequence belongs to the SAICAR synthetase family.

It carries out the reaction 5-amino-1-(5-phospho-D-ribosyl)imidazole-4-carboxylate + L-aspartate + ATP = (2S)-2-[5-amino-1-(5-phospho-beta-D-ribosyl)imidazole-4-carboxamido]succinate + ADP + phosphate + 2 H(+). The protein operates within purine metabolism; IMP biosynthesis via de novo pathway; 5-amino-1-(5-phospho-D-ribosyl)imidazole-4-carboxamide from 5-amino-1-(5-phospho-D-ribosyl)imidazole-4-carboxylate: step 1/2. The protein is Phosphoribosylaminoimidazole-succinocarboxamide synthase of Staphylococcus epidermidis (strain ATCC 35984 / DSM 28319 / BCRC 17069 / CCUG 31568 / BM 3577 / RP62A).